The chain runs to 314 residues: Deacetoxycephalosporin C synthase (314 aa).

Residues aspartate 156–proline 269 enclose the Fe2OG dioxygenase domain.

It belongs to the iron/ascorbate-dependent oxidoreductase family. The cofactor is Fe cation. It depends on L-ascorbate as a cofactor.

It carries out the reaction penicillin N + 2-oxoglutarate + O2 = deacetoxycephalosporin C + succinate + CO2 + H2O. Its pathway is antibiotic biosynthesis; cephalosporin C biosynthesis. Catalyzes the step from penicillin N to deacetoxy-cephalosporin C. The polypeptide is Deacetoxycephalosporin C synthase (cefE) (Amycolatopsis lactamdurans (Nocardia lactamdurans)).